The primary structure comprises 91 residues: Cell division protein ZapA (91 aa).

A coiled-coil region spans residues 58 to 91; sequence LTAVNIASEYLKLKEEYNRLREQLKKEKDGERDD.

Belongs to the ZapA family. Type 2 subfamily. In terms of assembly, homodimer. Interacts with FtsZ.

It localises to the cytoplasm. Activator of cell division through the inhibition of FtsZ GTPase activity, therefore promoting FtsZ assembly into bundles of protofilaments necessary for the formation of the division Z ring. It is recruited early at mid-cell but it is not essential for cell division. This is Cell division protein ZapA from Geobacillus kaustophilus (strain HTA426).